The sequence spans 414 residues: WD repeat-containing protein jip5 (414 aa).

5 WD repeats span residues 9–48 (PLSADLFSQALHPKEPIVSVGLSTGHVQTFRLPSEESDTD), 73–112 (RHKGSCRCLGFGVDGEMLYSAGTDGLVKAAKAETGVVENK), 118–159 (AKDG…SPVS), 222–263 (VSSV…DQDE), and 319–356 (DETEGVIGLGFDVEGRMVSGGGQVVKVWHEAVDSDGMD). Positions 39–65 (RLPSEESDTDGDGAESTSSSRNGKGHI) are disordered. The segment at 352–414 (SDGMDGDMAG…QDIMGFADID (63 aa)) is disordered. Residues 369-383 (DSDDSDDGDDSDDSD) show a composition bias toward acidic residues.

This sequence belongs to the WD repeat WDR55 family.

The protein localises to the nucleus. It is found in the nucleolus. This is WD repeat-containing protein jip5 (jip5) from Neosartorya fischeri (strain ATCC 1020 / DSM 3700 / CBS 544.65 / FGSC A1164 / JCM 1740 / NRRL 181 / WB 181) (Aspergillus fischerianus).